The following is a 1651-amino-acid chain: Alsin (1651 aa).

RCC1 repeat units lie at residues 59 to 108 (DGEV…AVTE), 109 to 167 (SGVV…ALSL), and 169 to 218 (REIW…ALVQ). The segment at 425 to 462 (ETAAQSGSASTGPESLKDLREEQVKQESLQGKKSSSLM) is disordered. Residues 427-437 (AAQSGSASTGP) show a composition bias toward polar residues. Residues 439 to 449 (SLKDLREEQVK) show a composition bias toward basic and acidic residues. Residues 450–461 (QESLQGKKSSSL) show a composition bias toward polar residues. A phosphoserine mark is found at S459, S460, S477, and S486. T504 carries the phosphothreonine modification. 2 RCC1 repeats span residues 519–570 (RTEV…ALTA) and 572–621 (SQVY…FLVD). An N6-acetyllysine modification is found at K527. One can recognise a DH domain in the interval 684-879 (GYIASLHELA…ESLALHLGKK (196 aa)). In terms of domain architecture, PH spans 895 to 1001 (GKMTDSLRKP…RAISQAVDQA (107 aa)). MORN repeat units lie at residues 1043–1065 (YDGR…DGKM), 1066–1088 (YSGM…NKAL), 1094–1116 (YVGH…SGEV), 1117–1139 (FEGC…KLTS), 1145–1167 (FIGQ…TRGE), 1169–1191 (YMGM…FGLY), 1192–1214 (YEGN…DDTI), and 1215–1238 (YEGE…HGDY). At S1329 the chain carries Phosphoserine. A VPS9 domain is found at 1507–1651 (KQPDIALLGF…YFQIQREKLN (145 aa)).

Forms a heteromeric complex with ALS2CL. Interacts with ALS2CL.

May act as a GTPase regulator. Controls survival and growth of spinal motoneurons. The sequence is that of Alsin (Als2) from Mus musculus (Mouse).